The primary structure comprises 246 residues: 3-deoxy-manno-octulosonate cytidylyltransferase (246 aa).

Belongs to the KdsB family.

The protein localises to the cytoplasm. It carries out the reaction 3-deoxy-alpha-D-manno-oct-2-ulosonate + CTP = CMP-3-deoxy-beta-D-manno-octulosonate + diphosphate. Its pathway is nucleotide-sugar biosynthesis; CMP-3-deoxy-D-manno-octulosonate biosynthesis; CMP-3-deoxy-D-manno-octulosonate from 3-deoxy-D-manno-octulosonate and CTP: step 1/1. The protein operates within bacterial outer membrane biogenesis; lipopolysaccharide biosynthesis. Activates KDO (a required 8-carbon sugar) for incorporation into bacterial lipopolysaccharide in Gram-negative bacteria. The polypeptide is 3-deoxy-manno-octulosonate cytidylyltransferase (Bradyrhizobium sp. (strain ORS 278)).